We begin with the raw amino-acid sequence, 706 residues long: Elongation factor G (706 aa).

Residues 8–295 (ERYRNFGIMA…AVIDYLPSPL (288 aa)) enclose the tr-type G domain. Residues 17 to 24 (AHIDAGKT), 92 to 96 (DTPGH), and 146 to 149 (NKMD) each bind GTP.

Belongs to the TRAFAC class translation factor GTPase superfamily. Classic translation factor GTPase family. EF-G/EF-2 subfamily.

It is found in the cytoplasm. In terms of biological role, catalyzes the GTP-dependent ribosomal translocation step during translation elongation. During this step, the ribosome changes from the pre-translocational (PRE) to the post-translocational (POST) state as the newly formed A-site-bound peptidyl-tRNA and P-site-bound deacylated tRNA move to the P and E sites, respectively. Catalyzes the coordinated movement of the two tRNA molecules, the mRNA and conformational changes in the ribosome. This chain is Elongation factor G, found in Jannaschia sp. (strain CCS1).